A 250-amino-acid chain; its full sequence is Peptidyl-tRNA hydrolase (250 aa).

Tyrosine 14 provides a ligand contact to tRNA. Histidine 19 acts as the Proton acceptor in catalysis. Positions 64, 66, and 112 each coordinate tRNA. Residues methionine 192–aspartate 250 form a disordered region. The segment covering histidine 219 to lysine 229 has biased composition (polar residues). Basic and acidic residues predominate over residues methionine 241 to aspartate 250.

It belongs to the PTH family. In terms of assembly, monomer.

Its subcellular location is the cytoplasm. The catalysed reaction is an N-acyl-L-alpha-aminoacyl-tRNA + H2O = an N-acyl-L-amino acid + a tRNA + H(+). Functionally, hydrolyzes ribosome-free peptidyl-tRNAs (with 1 or more amino acids incorporated), which drop off the ribosome during protein synthesis, or as a result of ribosome stalling. Catalyzes the release of premature peptidyl moieties from peptidyl-tRNA molecules trapped in stalled 50S ribosomal subunits, and thus maintains levels of free tRNAs and 50S ribosomes. The sequence is that of Peptidyl-tRNA hydrolase from Brucella abortus (strain 2308).